The following is a 619-amino-acid chain: Elongation factor 4 (619 aa).

Residues 17–198 (SVIRNFCIIA…RVVRAIPGPE (182 aa)) form the tr-type G domain. Residues 29–34 (DHGKST) and 145–148 (NKID) each bind GTP.

This sequence belongs to the TRAFAC class translation factor GTPase superfamily. Classic translation factor GTPase family. LepA subfamily.

The protein resides in the cell membrane. It catalyses the reaction GTP + H2O = GDP + phosphate + H(+). Required for accurate and efficient protein synthesis under certain stress conditions. May act as a fidelity factor of the translation reaction, by catalyzing a one-codon backward translocation of tRNAs on improperly translocated ribosomes. Back-translocation proceeds from a post-translocation (POST) complex to a pre-translocation (PRE) complex, thus giving elongation factor G a second chance to translocate the tRNAs correctly. Binds to ribosomes in a GTP-dependent manner. The protein is Elongation factor 4 of Micrococcus luteus (strain ATCC 4698 / DSM 20030 / JCM 1464 / CCM 169 / CCUG 5858 / IAM 1056 / NBRC 3333 / NCIMB 9278 / NCTC 2665 / VKM Ac-2230) (Micrococcus lysodeikticus).